A 212-amino-acid polypeptide reads, in one-letter code: Stem bromelain (212 aa).

Disulfide bonds link cysteine 23-cysteine 63 and cysteine 57-cysteine 96. Cysteine 26 is an active-site residue. Asparagine 117 carries N-linked (GlcNAc...) asparagine glycosylation. Cysteine 152 and cysteine 199 are disulfide-bonded. Histidine 158 is a catalytic residue.

Belongs to the peptidase C1 family.

The enzyme catalyses Broad specificity for cleavage of proteins, but strong preference for Z-Arg-Arg-|-NHMec among small molecule substrates.. Functionally, cysteine proteinase with a high level of diversity in substrate specificity. The protein is Stem bromelain of Ananas comosus (Pineapple).